The chain runs to 801 residues: Phenylalanine--tRNA ligase beta subunit (801 aa).

The region spanning 39–153 (AAGLSKIVVG…EDAVPGEEVF (115 aa)) is the tRNA-binding domain. The region spanning 406–481 (TSDVEVSSTL…RIYGYDRLPT (76 aa)) is the B5 domain. Mg(2+) is bound by residues D459, D465, E468, and E469. The 94-residue stretch at 708 to 801 (TKFPAVSRDV…LEEKVNAEVR (94 aa)) folds into the FDX-ACB domain.

The protein belongs to the phenylalanyl-tRNA synthetase beta subunit family. Type 1 subfamily. Tetramer of two alpha and two beta subunits. It depends on Mg(2+) as a cofactor.

It is found in the cytoplasm. It carries out the reaction tRNA(Phe) + L-phenylalanine + ATP = L-phenylalanyl-tRNA(Phe) + AMP + diphosphate + H(+). The protein is Phenylalanine--tRNA ligase beta subunit of Streptococcus pneumoniae serotype 4 (strain ATCC BAA-334 / TIGR4).